A 319-amino-acid polypeptide reads, in one-letter code: Mercury resistance probable Hg transport protein (319 aa).

The Hg(2+) site is built by C298, C299, C318, and C319.

This chain is Mercury resistance probable Hg transport protein, found in Streptomyces lividans.